The following is a 214-amino-acid chain: Large ribosomal subunit protein uL3 (214 aa).

Residues 129 to 157 (FGRGPMSHGSKNHRRPGSIGAGTTPGRVF) are disordered.

Belongs to the universal ribosomal protein uL3 family. In terms of assembly, part of the 50S ribosomal subunit. Forms a cluster with proteins L14 and L19.

In terms of biological role, one of the primary rRNA binding proteins, it binds directly near the 3'-end of the 23S rRNA, where it nucleates assembly of the 50S subunit. The sequence is that of Large ribosomal subunit protein uL3 from Synechococcus sp. (strain JA-2-3B'a(2-13)) (Cyanobacteria bacterium Yellowstone B-Prime).